Consider the following 297-residue polypeptide: Ribosomal RNA small subunit methyltransferase H (297 aa).

S-adenosyl-L-methionine contacts are provided by residues 37-39, glutamate 56, phenylalanine 87, aspartate 102, and histidine 109; that span reads GGH.

It belongs to the methyltransferase superfamily. RsmH family.

The protein localises to the cytoplasm. It carries out the reaction cytidine(1402) in 16S rRNA + S-adenosyl-L-methionine = N(4)-methylcytidine(1402) in 16S rRNA + S-adenosyl-L-homocysteine + H(+). Its function is as follows. Specifically methylates the N4 position of cytidine in position 1402 (C1402) of 16S rRNA. The polypeptide is Ribosomal RNA small subunit methyltransferase H (Borrelia recurrentis (strain A1)).